The sequence spans 716 residues: UvrABC system protein C (716 aa).

In terms of domain architecture, GIY-YIG spans 14-94 (AEPGCYLMKD…IKRHRPRFNI (81 aa)). The UVR domain maps to 206 to 241 (TELVERLHGRMDEAADALRFEDAARLRDQLQAVERS).

It belongs to the UvrC family. Interacts with UvrB in an incision complex.

It is found in the cytoplasm. Its function is as follows. The UvrABC repair system catalyzes the recognition and processing of DNA lesions. UvrC both incises the 5' and 3' sides of the lesion. The N-terminal half is responsible for the 3' incision and the C-terminal half is responsible for the 5' incision. This chain is UvrABC system protein C, found in Anaeromyxobacter sp. (strain Fw109-5).